The sequence spans 143 residues: Large ribosomal subunit protein uL11 (143 aa).

This sequence belongs to the universal ribosomal protein uL11 family. Part of the ribosomal stalk of the 50S ribosomal subunit. Interacts with L10 and the large rRNA to form the base of the stalk. L10 forms an elongated spine to which L12 dimers bind in a sequential fashion forming a multimeric L10(L12)X complex. One or more lysine residues are methylated.

In terms of biological role, forms part of the ribosomal stalk which helps the ribosome interact with GTP-bound translation factors. The chain is Large ribosomal subunit protein uL11 from Rhizobium johnstonii (strain DSM 114642 / LMG 32736 / 3841) (Rhizobium leguminosarum bv. viciae).